A 440-amino-acid polypeptide reads, in one-letter code: Ribosomal protein uS12 methylthiotransferase RimO (440 aa).

Residues 8–118 (PTVGFVSLGC…VMGIVHTHLP (111 aa)) form the MTTase N-terminal domain. The [4Fe-4S] cluster site is built by Cys17, Cys53, Cys82, Cys149, Cys153, and Cys156. The 238-residue stretch at 135-372 (LTPDHFAYLK…MQVQEDISAD (238 aa)) folds into the Radical SAM core domain. Residues 375 to 440 (AAKIDTVIQV…DHHDLYAQVV (66 aa)) form the TRAM domain.

This sequence belongs to the methylthiotransferase family. RimO subfamily. [4Fe-4S] cluster is required as a cofactor.

It localises to the cytoplasm. The catalysed reaction is L-aspartate(89)-[ribosomal protein uS12]-hydrogen + (sulfur carrier)-SH + AH2 + 2 S-adenosyl-L-methionine = 3-methylsulfanyl-L-aspartate(89)-[ribosomal protein uS12]-hydrogen + (sulfur carrier)-H + 5'-deoxyadenosine + L-methionine + A + S-adenosyl-L-homocysteine + 2 H(+). Its function is as follows. Catalyzes the methylthiolation of an aspartic acid residue of ribosomal protein uS12. The chain is Ribosomal protein uS12 methylthiotransferase RimO from Dechloromonas aromatica (strain RCB).